The primary structure comprises 427 residues: 3-phosphoshikimate 1-carboxyvinyltransferase (427 aa).

3-phosphoshikimate contacts are provided by K20, S21, and R25. A phosphoenolpyruvate-binding site is contributed by K20. Phosphoenolpyruvate is bound by residues G90 and R118. The 3-phosphoshikimate site is built by S163, S164, Q165, S191, D309, and K336. Q165 provides a ligand contact to phosphoenolpyruvate. Residue D309 is the Proton acceptor of the active site. Phosphoenolpyruvate contacts are provided by R340 and R381.

This sequence belongs to the EPSP synthase family. In terms of assembly, monomer.

It is found in the cytoplasm. The catalysed reaction is 3-phosphoshikimate + phosphoenolpyruvate = 5-O-(1-carboxyvinyl)-3-phosphoshikimate + phosphate. It functions in the pathway metabolic intermediate biosynthesis; chorismate biosynthesis. Functionally, catalyzes the transfer of the enolpyruvyl moiety of phosphoenolpyruvate (PEP) to the 5-hydroxyl of shikimate-3-phosphate (S3P) to produce enolpyruvyl shikimate-3-phosphate and inorganic phosphate. This Methanococcoides burtonii (strain DSM 6242 / NBRC 107633 / OCM 468 / ACE-M) protein is 3-phosphoshikimate 1-carboxyvinyltransferase.